Here is a 428-residue protein sequence, read N- to C-terminus: 3-phosphoshikimate 1-carboxyvinyltransferase (428 aa).

3-phosphoshikimate contacts are provided by lysine 21, serine 22, and arginine 26. Phosphoenolpyruvate is bound at residue lysine 21. Phosphoenolpyruvate is bound by residues glycine 91 and arginine 119. 3-phosphoshikimate-binding residues include serine 164, glutamine 166, aspartate 313, and lysine 340. Glutamine 166 lines the phosphoenolpyruvate pocket. The Proton acceptor role is filled by aspartate 313. 2 residues coordinate phosphoenolpyruvate: arginine 344 and arginine 386.

The protein belongs to the EPSP synthase family. Monomer.

The protein resides in the cytoplasm. The catalysed reaction is 3-phosphoshikimate + phosphoenolpyruvate = 5-O-(1-carboxyvinyl)-3-phosphoshikimate + phosphate. The protein operates within metabolic intermediate biosynthesis; chorismate biosynthesis; chorismate from D-erythrose 4-phosphate and phosphoenolpyruvate: step 6/7. In terms of biological role, catalyzes the transfer of the enolpyruvyl moiety of phosphoenolpyruvate (PEP) to the 5-hydroxyl of shikimate-3-phosphate (S3P) to produce enolpyruvyl shikimate-3-phosphate and inorganic phosphate. The polypeptide is 3-phosphoshikimate 1-carboxyvinyltransferase (Campylobacter jejuni subsp. doylei (strain ATCC BAA-1458 / RM4099 / 269.97)).